We begin with the raw amino-acid sequence, 221 residues long: Phosphoribosylformylglycinamidine synthase subunit PurQ (221 aa).

Positions 2 to 221 (NVGVIVFPGS…FAGLLEPVAA (220 aa)) constitute a Glutamine amidotransferase type-1 domain. Cys86 serves as the catalytic Nucleophile. Residues His194 and Glu196 contribute to the active site.

In terms of assembly, part of the FGAM synthase complex composed of 1 PurL, 1 PurQ and 2 PurS subunits.

Its subcellular location is the cytoplasm. The catalysed reaction is N(2)-formyl-N(1)-(5-phospho-beta-D-ribosyl)glycinamide + L-glutamine + ATP + H2O = 2-formamido-N(1)-(5-O-phospho-beta-D-ribosyl)acetamidine + L-glutamate + ADP + phosphate + H(+). The enzyme catalyses L-glutamine + H2O = L-glutamate + NH4(+). It participates in purine metabolism; IMP biosynthesis via de novo pathway; 5-amino-1-(5-phospho-D-ribosyl)imidazole from N(2)-formyl-N(1)-(5-phospho-D-ribosyl)glycinamide: step 1/2. Functionally, part of the phosphoribosylformylglycinamidine synthase complex involved in the purines biosynthetic pathway. Catalyzes the ATP-dependent conversion of formylglycinamide ribonucleotide (FGAR) and glutamine to yield formylglycinamidine ribonucleotide (FGAM) and glutamate. The FGAM synthase complex is composed of three subunits. PurQ produces an ammonia molecule by converting glutamine to glutamate. PurL transfers the ammonia molecule to FGAR to form FGAM in an ATP-dependent manner. PurS interacts with PurQ and PurL and is thought to assist in the transfer of the ammonia molecule from PurQ to PurL. The sequence is that of Phosphoribosylformylglycinamidine synthase subunit PurQ from Synechococcus sp. (strain ATCC 27144 / PCC 6301 / SAUG 1402/1) (Anacystis nidulans).